Consider the following 328-residue polypeptide: Fructosamine deglycase FrlB (328 aa).

SIS domains lie at 15–153 and 181–311; these read FLQD…VLEN and NAKQ…ELAE.

Homooctamer.

Functionally, catalyzes the conversion of a range of fructosamine 6-phosphates to glucose 6-phosphate and a free amino acid. The sequence is that of Fructosamine deglycase FrlB (frlB) from Bacillus subtilis (strain 168).